Reading from the N-terminus, the 142-residue chain is Large ribosomal subunit protein uL13 (142 aa).

The protein belongs to the universal ribosomal protein uL13 family. As to quaternary structure, part of the 50S ribosomal subunit.

This protein is one of the early assembly proteins of the 50S ribosomal subunit, although it is not seen to bind rRNA by itself. It is important during the early stages of 50S assembly. This Stenotrophomonas maltophilia (strain K279a) protein is Large ribosomal subunit protein uL13.